Reading from the N-terminus, the 78-residue chain is MLQRTLGSGWGVLLPGLLIAGLMYADLSSDQWRIVILMGLVLTPMMLYHKQLRHYILLPSCLALIAGIMLMIMNLNQG.

This is an uncharacterized protein from Escherichia coli (strain K12).